The chain runs to 1940 residues: Myosin-2 (1940 aa).

Positions 33 to 82 (DAKTSVFVAEPKESFVKGTVQSREGGKVTVKTEAGATLTVKEDQVFPMNP) constitute a Myosin N-terminal SH3-like domain. Thr-64 and Thr-69 each carry phosphothreonine. Positions 86-783 (DKIEDMAMMT…LLGLLEEMRD (698 aa)) constitute a Myosin motor domain. Residue Lys-130 is modified to N6,N6,N6-trimethyllysine. Residue 179–186 (GESGAGKT) participates in ATP binding. The residue at position 389 (Tyr-389) is a Phosphotyrosine. Residue Ser-392 is modified to Phosphoserine. Thr-419 carries the phosphothreonine modification. Ser-625 is modified (phosphoserine). The segment at 660 to 682 (LNKLMTNLRSTHPHFVRCIIPNE) is actin-binding. At His-758 the chain carries Pros-methylhistidine. The actin-binding stretch occupies residues 762–776 (KFGHTKVFFKAGLLG). Positions 786 to 815 (LAQLITRTQARCRGFLARVEYQKMVERRES) constitute an IQ domain. Positions 844 to 1940 (LLKSAETEKE…EVHTKVISEE (1097 aa)) form a coiled coil. Phosphoserine is present on residues Ser-1093, Ser-1097, Ser-1163, and Ser-1238. A disordered region spans residues 1154–1173 (RLEEAGGATSAQIEMNKKRE). Phosphothreonine is present on Thr-1242. Ser-1244 is subject to Phosphoserine. Thr-1256 carries the post-translational modification Phosphothreonine. Residue Ser-1262 is modified to Phosphoserine. At Thr-1287 the chain carries Phosphothreonine. Phosphoserine is present on residues Ser-1289, Ser-1293, Ser-1304, and Ser-1307. Position 1465 is a phosphotyrosine (Tyr-1465). The residue at position 1468 (Thr-1468) is a Phosphothreonine. Ser-1475 is modified (phosphoserine). Tyr-1493 bears the Phosphotyrosine mark. At Ser-1496 the chain carries Phosphoserine. Thr-1502 is subject to Phosphothreonine. A Phosphoserine modification is found at Ser-1515. At Thr-1518 the chain carries Phosphothreonine. Ser-1543, Ser-1555, Ser-1575, Ser-1601, Ser-1715, and Ser-1727 each carry phosphoserine. Thr-1731 and Thr-1737 each carry phosphothreonine. The residue at position 1740 (Ser-1740) is a Phosphoserine. The segment at 1884–1920 (KRQAEEAEEQSNTNLSKFRKLQHELEEAEERADIAES) is disordered.

Belongs to the TRAFAC class myosin-kinesin ATPase superfamily. Myosin family. Muscle myosin is a hexameric protein that consists of 2 heavy chain subunits (MHC), 2 alkali light chain subunits (MLC) and 2 regulatory light chain subunits (MLC-2). Interacts with GCSAM.

The protein localises to the cytoplasm. It localises to the myofibril. Functionally, myosins are actin-based motor molecules with ATPase activity essential for muscle contraction. The chain is Myosin-2 (MYH2) from Canis lupus familiaris (Dog).